The chain runs to 99 residues: Small ribosomal subunit protein uS19 (99 aa).

The segment at 77-99 is disordered; the sequence is TRTFHGHSGDKKAKVAKGGPGGR.

The protein belongs to the universal ribosomal protein uS19 family.

Functionally, protein S19 forms a complex with S13 that binds strongly to the 16S ribosomal RNA. The protein is Small ribosomal subunit protein uS19 of Sorangium cellulosum (strain So ce56) (Polyangium cellulosum (strain So ce56)).